Here is a 911-residue protein sequence, read N- to C-terminus: Protein translocase subunit SecA (911 aa).

Residues glutamine 87, 105 to 109 (GEGKT), and aspartate 512 contribute to the ATP site. The interval 865–892 (AAEQDGAEEGAVATATAPVRSENKVGRN) is disordered. Residues 873–883 (EGAVATATAPV) show a composition bias toward low complexity. The Zn(2+) site is built by cysteine 895, cysteine 897, cysteine 906, and histidine 907.

Belongs to the SecA family. Monomer and homodimer. Part of the essential Sec protein translocation apparatus which comprises SecA, SecYEG and auxiliary proteins SecDF-YajC and YidC. Zn(2+) is required as a cofactor.

The protein resides in the cell inner membrane. It is found in the cytoplasm. The catalysed reaction is ATP + H2O + cellular proteinSide 1 = ADP + phosphate + cellular proteinSide 2.. Functionally, part of the Sec protein translocase complex. Interacts with the SecYEG preprotein conducting channel. Has a central role in coupling the hydrolysis of ATP to the transfer of proteins into and across the cell membrane, serving both as a receptor for the preprotein-SecB complex and as an ATP-driven molecular motor driving the stepwise translocation of polypeptide chains across the membrane. The protein is Protein translocase subunit SecA of Ectopseudomonas mendocina (strain ymp) (Pseudomonas mendocina).